A 224-amino-acid chain; its full sequence is Cytidylate kinase (224 aa).

Gly-9–Thr-17 serves as a coordination point for ATP.

The protein belongs to the cytidylate kinase family. Type 1 subfamily.

The protein resides in the cytoplasm. It catalyses the reaction CMP + ATP = CDP + ADP. The catalysed reaction is dCMP + ATP = dCDP + ADP. The sequence is that of Cytidylate kinase from Dichelobacter nodosus (strain VCS1703A).